The primary structure comprises 2339 residues: Voltage-dependent N-type calcium channel subunit alpha-1B (2339 aa).

Residues 1–37 (MVRFGDELGGRYGGPGGGERARGGGAGGAGGPGPGGL) form a disordered region. Topologically, residues 1 to 90 (MVRFGDELGG…DNVVRKYAKR (90 aa)) are cytoplasmic. Positions 10–37 (GRYGGPGGGERARGGGAGGAGGPGPGGL) are enriched in gly residues. Arg22 carries the post-translational modification Omega-N-methylarginine. The stretch at 82–359 (NVVRKYAKRI…LVLGVLSGEF (278 aa)) is one I repeat. The helical transmembrane segment at 91–114 (ITEWPPFEYMILATIIANCIVLAL) threads the bilayer. Residues 115–131 (EQHLPDGDKTPMSERLD) are Extracellular-facing. Residues 132–152 (DTEPYFIGIFCFEAGIKIIAL) form a helical membrane-spanning segment. Over 153–163 (GFVFHKGSYLR) the chain is Cytoplasmic. Residues 164–182 (NGWNVMDFVVVLTGILATA) traverse the membrane as a helical segment. Residues 183–187 (GTDFD) lie on the Extracellular side of the membrane. Residues 188-211 (LRTLRAVRVLRPLKLVSGIPSLQV) form a helical membrane-spanning segment. The Cytoplasmic portion of the chain corresponds to 212–221 (VLKSIMKAMV). A helical transmembrane segment spans residues 222–244 (PLLQIGLLLFFAILMFAIIGLEF). At 245-331 (YMGKFHKACF…NTNDAAGNTW (87 aa)) the chain is on the extracellular side. The N-linked (GlcNAc...) asparagine glycan is linked to Asn256. The chain crosses the membrane as a helical span at residues 332-356 (NWLYFIPLIIIGSFFMLNLVLGVLS). Over 357–482 (GEFAKERERV…FFIRRMVKAQ (126 aa)) the chain is Cytoplasmic. Residues 379 to 396 (QQIERELNGYLEWIFKAE) are binding to the beta subunit. Phosphoserine is present on Ser411. 451–458 (ASLKSGKT) lines the ATP pocket. The II repeat unit spans residues 468–712 (EKMFRFFIRR…VFLAIAVDNL (245 aa)). The chain crosses the membrane as a helical span at residues 483-501 (SFYWVVLCVVALNTLCVAM). Topologically, residues 502–511 (VHYNQPRRLT) are extracellular. A helical membrane pass occupies residues 512 to 534 (TTLYFAEFVFLGLFLTEMSLKMY). The Cytoplasmic segment spans residues 535–544 (GLGPRSYFRS). An a 1,2-diacyl-sn-glycero-3-phospho-(1D-myo-inositol-4,5-bisphosphate)-binding site is contributed by Ser544. A helical membrane pass occupies residues 545-566 (SFNCFDFGVIVGSVFEVVWAAI). Over 567–573 (KPGSSFG) the chain is Extracellular. Residues 574-586 (ISVLRALRLLRIF) form a helical membrane-spanning segment. Arg584 and Lys587 together coordinate a 1,2-diacyl-sn-glycero-3-phospho-(1D-myo-inositol-4,5-bisphosphate). At 587 to 604 (KVTKYWSSLRNLVVSLLN) the chain is on the cytoplasmic side. A helical membrane pass occupies residues 605-630 (SMKSIISLLFLLFLFIVVFALLGMQL). Topologically, residues 631-682 (FGGQFNFQDETPTTNFDTFPAAILTVFQILTGEDWNAVMYHGIESQGGVSKG) are extracellular. Residues 683 to 709 (MFSSFYFIVLTLFGNYTLLNVFLAIAV) form a helical membrane-spanning segment. At 710–1151 (DNLANAQELT…FCHYIVTMRY (442 aa)) the chain is on the cytoplasmic side. 3 positions are modified to phosphoserine: Ser745, Ser748, and Ser783. Composition is skewed to basic and acidic residues over residues 816 to 826 (PLVVELGRDGA), 857 to 886 (KDKTPAAGDQDRAEAPKAESGEPGAREERP), 922 to 932 (GSPEEAAEREP), and 965 to 976 (GPREAESGEEPA). 2 disordered regions span residues 816–1038 (PLVV…VTVG) and 1054–1076 (QPEDADNQRNVTRMGSQPPDPNT). Residues 977-986 (RRHRARHKAQ) show a composition bias toward basic residues. Residues 990-1029 (EAVEKETTEKEATEKEAEIVEADKEKELRNHQPREPHCDL) show a composition bias toward basic and acidic residues. Ser1069 is subject to Phosphoserine. The stretch at 1137-1419 (NLLRRFCHYI…IFVALIIITF (283 aa)) is one III repeat. The chain crosses the membrane as a helical span at residues 1152–1170 (FEVVILVVIALSSIALAAE). Residues 1171–1178 (DPVRTDSP) are Extracellular-facing. A helical membrane pass occupies residues 1179–1203 (RNNALKYLDYIFTGVFTFEMVIKMI). At 1204-1217 (DLGLLLHPGAYFRD) the chain is on the cytoplasmic side. The chain crosses the membrane as a helical span at residues 1218 to 1238 (LWNILDFIVVSGALVAFAFSG). At 1239–1244 (SKGKDI) the chain is on the extracellular side. The chain crosses the membrane as a helical span at residues 1245 to 1265 (NTIKSLRVLRVLRPLKTIKRL). Residues 1266–1283 (PKLKAVFDCVVNSLKNVL) are Cytoplasmic-facing. A helical transmembrane segment spans residues 1284–1303 (NILIVYMLFMFIFAVIAVQL). Topologically, residues 1304-1390 (FKGKFFYCTD…EQGPSPGYRM (87 aa)) are extracellular. The helical transmembrane segment at 1391–1416 (ELSIFYVVYFVVFPFFFVNIFVALII) threads the bilayer. Residues 1417–1471 (ITFQEQGDKVMSECSLEKNERACIDFAISAKPLTRYMPQNRQSFQYKTWTFVVSP) lie on the Cytoplasmic side of the membrane. An IV repeat occupies 1456–1711 (NRQSFQYKTW…LFVAVIMDNF (256 aa)). A helical transmembrane segment spans residues 1472 to 1490 (PFEYFIMAMIALNTVVLMM). At 1491 to 1498 (KFYDAPYE) the chain is on the extracellular side. The chain crosses the membrane as a helical span at residues 1499 to 1523 (YELMLKCLNIVFTSMFSMECVLKII). Over 1524-1533 (AFGVLNYFRD) the chain is Cytoplasmic. The chain crosses the membrane as a helical span at residues 1534 to 1555 (AWNVFDFVTVLGSITDILVTEI). At 1556–1563 (AETNNFIN) the chain is on the extracellular side. Residue Asn1563 is glycosylated (N-linked (GlcNAc...) asparagine). The helical transmembrane segment at 1564-1582 (LSFLRLFRAARLIKLLRQG) threads the bilayer. Topologically, residues 1583–1601 (YTIRILLWTFVQSFKALPY) are cytoplasmic. The helical transmembrane segment at 1602 to 1621 (VCLLIAMLFFIYAIIGMQVF) threads the bilayer. At 1622 to 1683 (GNIALDDDTS…ANATECGSDF (62 aa)) the chain is on the extracellular side. Residue Asn1675 is glycosylated (N-linked (GlcNAc...) asparagine). Residues 1684–1707 (AYFYFVSFIFLCSFLMLNLFVAVI) traverse the membrane as a helical segment. Topologically, residues 1708-2339 (MDNFEYLTRD…YHHPDQDHWC (632 aa)) are cytoplasmic. The region spanning 1724–1759 (HHLDEFIRVWAEYDPAACGRISYNDMFEMLKHMSPP) is the EF-hand domain. Ca(2+) contacts are provided by Asp1737, Arg1743, and Asp1748. Residues 1916 to 1931 (SSTSLSNGGAIQNQES) show a composition bias toward polar residues. 2 disordered regions span residues 1916–1968 (SSTS…VGRS) and 1981–2206 (TRRG…YKTA). Over residues 1946–1960 (DAPHEARPPLERGHS) the composition is skewed to basic and acidic residues. The span at 2049–2063 (SHHHHHRCHRRRDRK) shows a compositional bias: basic residues. The residue at position 2066 (Ser2066) is a Phosphoserine. The span at 2098-2116 (CRRERERRQERGRSQERRQ) shows a compositional bias: basic and acidic residues. Over residues 2143–2153 (PSLSSHPTSPT) the composition is skewed to low complexity. Residues 2164–2180 (GSGSVNGSPLLSTSGAS) show a composition bias toward polar residues. Ser2224, Ser2233, and Ser2256 each carry phosphoserine.

It belongs to the calcium channel alpha-1 subunit (TC 1.A.1.11) family. CACNA1B subfamily. In terms of assembly, multisubunit complex consisting of alpha-1, alpha-2, beta and delta subunits in a 1:1:1:1 ratio. The channel activity is directed by the pore-forming and voltage-sensitive alpha-1 subunit. In many cases, this subunit is sufficient to generate voltage-sensitive calcium channel activity. The auxiliary subunits beta and alpha-2/delta linked by a disulfide bridge regulate the channel activity. Interacts with RIMS1. Interacts with FMR1 (via C-terminus); this interaction induces a decrease in the number of presynaptic functional CACNA1B channels at the cell surface. Post-translationally, phosphorylated in vitro by CaM-kinase II, PKA, PKC and CGPK. In terms of tissue distribution, isoform Alpha-1b-1 and isoform Alpha-1b-2 are expressed in the central nervous system, but not in skeletal muscle or aorta. Expressed in the cerebral white matter, cortex, hippocampus, basal ganglia, and cerebellum.

It is found in the membrane. The catalysed reaction is Ca(2+)(in) = Ca(2+)(out). With respect to regulation, is specifically blocked by omega-conotoxin GVIA. Is specifically blocked by omega-conotoxin MVIIA (ziconotide). Is insensitive to dihydropyridines (DHP). Its activity is regulated as follows. Is specifically blocked by omega-conotoxin MVIIA (ziconotide). Is insensitive to dihydropyridines (DHP). In terms of biological role, voltage-sensitive calcium channels (VSCC) mediate the entry of calcium ions into excitable cells and are also involved in a variety of calcium-dependent processes, including muscle contraction, hormone or neurotransmitter release, gene expression, cell motility, cell division and cell death. This alpha-1B subunit gives rise to N-type calcium currents. N-type calcium channels belong to the 'high-voltage activated' (HVA) group. They are involved in pain signaling. Calcium channels containing alpha-1B subunit may play a role in directed migration of immature neurons. Mediates Ca(2+) release probability at hippocampal neuronal soma and synaptic terminals. Its function is as follows. Voltage-sensitive calcium channels (VSCC) mediate the entry of calcium ions into excitable cells and are also involved in a variety of calcium-dependent processes, including muscle contraction, hormone or neurotransmitter release, gene expression, cell motility, cell division and cell death. This alpha-1B subunit gives rise to N-type calcium currents. The protein is Voltage-dependent N-type calcium channel subunit alpha-1B (CACNA1B) of Homo sapiens (Human).